We begin with the raw amino-acid sequence, 279 residues long: Beta-lactamase (279 aa).

Positions 1–21 (MRYVRLCVISLLATLPLVVYA) are cleaved as a signal peptide. The Acyl-ester intermediate role is filled by Ser66. An intrachain disulfide couples Cys73 to Cys119. A substrate-binding site is contributed by 230-232 (KTG).

The protein belongs to the class-A beta-lactamase family.

The catalysed reaction is a beta-lactam + H2O = a substituted beta-amino acid. The sequence is that of Beta-lactamase from Klebsiella pneumoniae.